The following is a 264-amino-acid chain: uncharacterized protein (264 aa).

The N-terminal stretch at 1 to 22 (MIHSKKLTLGICLVLLIILIGG) is a signal peptide. Residue Cys-23 is the site of N-palmitoyl cysteine attachment. Cys-23 is lipidated: S-diacylglycerol cysteine.

It belongs to the staphylococcal tandem lipoprotein family.

The protein resides in the cell membrane. This is an uncharacterized protein from Staphylococcus aureus (strain N315).